A 352-amino-acid polypeptide reads, in one-letter code: Molybdenum import ATP-binding protein ModC (352 aa).

Residues 1–229 (MLELNFSQTL…SVMNPWLPKE (229 aa)) enclose the ABC transporter domain. Residue 31 to 38 (GVSGAGKT) coordinates ATP. Positions 289 to 352 (QTSIRNVLRA…AQIKSVSITA (64 aa)) constitute a Mop domain.

It belongs to the ABC transporter superfamily. Molybdate importer (TC 3.A.1.8) family. As to quaternary structure, the complex is composed of two ATP-binding proteins (ModC), two transmembrane proteins (ModB) and a solute-binding protein (ModA).

The protein resides in the cell inner membrane. The enzyme catalyses molybdate(out) + ATP + H2O = molybdate(in) + ADP + phosphate + H(+). Its function is as follows. Part of the ABC transporter complex ModABC involved in molybdenum import. Responsible for energy coupling to the transport system. The chain is Molybdenum import ATP-binding protein ModC from Shigella boydii serotype 4 (strain Sb227).